Here is a 473-residue protein sequence, read N- to C-terminus: Bifunctional protein GlmU (473 aa).

The interval 1-240 is pyrophosphorylase; that stretch reads MAIHPLDVVI…AAQVAGVNSP (240 aa). Residues lysine 25, glutamine 83, 88 to 89, 110 to 112, glycine 147, glutamate 165, and asparagine 238 contribute to the UDP-N-acetyl-alpha-D-glucosamine site; these read GT and SGD. Aspartate 112 contributes to the Mg(2+) binding site. Asparagine 238 contributes to the Mg(2+) binding site. The interval 241–261 is linker; sequence VQLAELERVYQQRLATTLMEQ. Residues 262-473 form an N-acetyltransferase region; that stretch reads GVRLADPARL…WARPVKKPGV (212 aa). UDP-N-acetyl-alpha-D-glucosamine is bound by residues arginine 348 and lysine 366. Histidine 378 acts as the Proton acceptor in catalysis. The UDP-N-acetyl-alpha-D-glucosamine site is built by tyrosine 381 and asparagine 392. Acetyl-CoA-binding positions include alanine 395, 401–402, serine 420, glycine 438, and arginine 455; that span reads NY.

This sequence in the N-terminal section; belongs to the N-acetylglucosamine-1-phosphate uridyltransferase family. In the C-terminal section; belongs to the transferase hexapeptide repeat family. As to quaternary structure, homotrimer. The cofactor is Mg(2+).

The protein localises to the cytoplasm. It carries out the reaction alpha-D-glucosamine 1-phosphate + acetyl-CoA = N-acetyl-alpha-D-glucosamine 1-phosphate + CoA + H(+). The enzyme catalyses N-acetyl-alpha-D-glucosamine 1-phosphate + UTP + H(+) = UDP-N-acetyl-alpha-D-glucosamine + diphosphate. It functions in the pathway nucleotide-sugar biosynthesis; UDP-N-acetyl-alpha-D-glucosamine biosynthesis; N-acetyl-alpha-D-glucosamine 1-phosphate from alpha-D-glucosamine 6-phosphate (route II): step 2/2. Its pathway is nucleotide-sugar biosynthesis; UDP-N-acetyl-alpha-D-glucosamine biosynthesis; UDP-N-acetyl-alpha-D-glucosamine from N-acetyl-alpha-D-glucosamine 1-phosphate: step 1/1. The protein operates within bacterial outer membrane biogenesis; LPS lipid A biosynthesis. Its function is as follows. Catalyzes the last two sequential reactions in the de novo biosynthetic pathway for UDP-N-acetylglucosamine (UDP-GlcNAc). The C-terminal domain catalyzes the transfer of acetyl group from acetyl coenzyme A to glucosamine-1-phosphate (GlcN-1-P) to produce N-acetylglucosamine-1-phosphate (GlcNAc-1-P), which is converted into UDP-GlcNAc by the transfer of uridine 5-monophosphate (from uridine 5-triphosphate), a reaction catalyzed by the N-terminal domain. The protein is Bifunctional protein GlmU of Polaromonas naphthalenivorans (strain CJ2).